The primary structure comprises 323 residues: tRNA uridine(34) hydroxylase (323 aa).

Residues 127–221 form the Rhodanese domain; it reads QDENTVVLDA…YGQDPEVQGD (95 aa). Cysteine 181 serves as the catalytic Cysteine persulfide intermediate.

This sequence belongs to the TrhO family.

The enzyme catalyses uridine(34) in tRNA + AH2 + O2 = 5-hydroxyuridine(34) in tRNA + A + H2O. Catalyzes oxygen-dependent 5-hydroxyuridine (ho5U) modification at position 34 in tRNAs. The chain is tRNA uridine(34) hydroxylase from Oceanobacillus iheyensis (strain DSM 14371 / CIP 107618 / JCM 11309 / KCTC 3954 / HTE831).